The primary structure comprises 78 residues: Large ribosomal subunit protein bL28 (78 aa).

The protein belongs to the bacterial ribosomal protein bL28 family.

This Synechococcus sp. (strain CC9311) protein is Large ribosomal subunit protein bL28.